A 270-amino-acid chain; its full sequence is MSAPIFDPTPEDIQNLLAAQTHIGSKNVQVQNIPYVFKQRADGVNIINVGKTWEKIQLAARIIAAVPNPADVVAISARTYGQRAVLKFANHCGATAIAGRFTPGSFTNYITRSFKEPRLLIVTDPRTDHQAIKEASYVNIPVIALVDTDSPVEFVDVAIPCNNKGRHSVGLVWWMISREVLRLRGALEDRNTEWSVMPDLYFYRDPEEPENTEEAAEEAATEEVVETAAAEAAAATNADNWDVAPDAGAGAADWAATDDWSESAPAPVAA.

Over residues 207-225 the composition is skewed to acidic residues; the sequence is EEPENTEEAAEEAATEEVV. A disordered region spans residues 207-270; that stretch reads EEPENTEEAA…SESAPAPVAA (64 aa). Over residues 226–258 the composition is skewed to low complexity; sequence ETAAAEAAAATNADNWDVAPDAGAGAADWAATD.

This sequence belongs to the universal ribosomal protein uS2 family. As to quaternary structure, component of the small ribosomal subunit. Mature ribosomes consist of a small (40S) and a large (60S) subunit. The 40S subunit contains about 33 different proteins and 1 molecule of RNA (18S). The 60S subunit contains about 49 different proteins and 3 molecules of RNA (25S, 5.8S and 5S). Interacts with RPS21.

It localises to the cytoplasm. In terms of biological role, required for the assembly and/or stability of the 40S ribosomal subunit. Required for the processing of the 20S rRNA-precursor to mature 18S rRNA in a late step of the maturation of 40S ribosomal subunits. The chain is Small ribosomal subunit protein uS2 from Yarrowia lipolytica (strain CLIB 122 / E 150) (Yeast).